A 130-amino-acid polypeptide reads, in one-letter code: MANKKNAPRKRRVKKNIEAGVAHIHSTFNNTLVMITDPNGNAVAWSSAGSLGFKGSRKSTPFAAQMAAEAAGKEAMEHGMKSIEVAVKGPGSGREAAIRSLQATGLEVTAIRDVTPVPHNGSRPPKRRRV.

The protein belongs to the universal ribosomal protein uS11 family. Part of the 30S ribosomal subunit. Interacts with proteins S7 and S18. Binds to IF-3.

In terms of biological role, located on the platform of the 30S subunit, it bridges several disparate RNA helices of the 16S rRNA. Forms part of the Shine-Dalgarno cleft in the 70S ribosome. The polypeptide is Small ribosomal subunit protein uS11 (Latilactobacillus sakei subsp. sakei (strain 23K) (Lactobacillus sakei subsp. sakei)).